We begin with the raw amino-acid sequence, 99 residues long: Small ribosomal subunit protein cS23 (99 aa).

Belongs to the chloroplast-specific ribosomal protein cS23 family. As to quaternary structure, part of the 30S ribosomal subunit.

It localises to the plastid. Its subcellular location is the chloroplast. Functionally, probably a ribosomal protein or a ribosome-associated protein. This chain is Small ribosomal subunit protein cS23, found in Gracilaria tenuistipitata var. liui (Red alga).